Consider the following 137-residue polypeptide: Large ribosomal subunit protein uL16c (137 aa).

This sequence belongs to the universal ribosomal protein uL16 family. Part of the 50S ribosomal subunit.

The protein resides in the plastid. The sequence is that of Large ribosomal subunit protein uL16c from Cuscuta reflexa (Southern Asian dodder).